A 185-amino-acid polypeptide reads, in one-letter code: MAKRKNKELLEIAQEIGGEEAVEVVKALEKMKEATDEELAEATGIRVNTVRRILYMLNDEGLADFKRIRDPETGWYYYYWRLETKKLPEIIRSRKMAELKKLKEMLEEETSEIYYWCGTEGHPKLTFDEAMEYEFQCPICGKMLMQYDNTHIIEELKRRIEELEIELGLKKKPRKTSKKKKSRSE.

The HTH TFE/IIEalpha-type domain occupies 5-88 (KNKELLEIAQ…YWRLETKKLP (84 aa)).

Belongs to the TFE family. As to quaternary structure, monomer. Interaction with RNA polymerase subunits RpoF and RpoE is necessary for Tfe stimulatory transcription activity. Able to interact with Tbp and RNA polymerase in the absence of DNA promoter. Interacts both with the preinitiation and elongation complexes.

Functionally, transcription factor that plays a role in the activation of archaeal genes transcribed by RNA polymerase. Facilitates transcription initiation by enhancing TATA-box recognition by TATA-box-binding protein (Tbp), and transcription factor B (Tfb) and RNA polymerase recruitment. Not absolutely required for transcription in vitro, but particularly important in cases where Tbp or Tfb function is not optimal. It dynamically alters the nucleic acid-binding properties of RNA polymerases by stabilizing the initiation complex and destabilizing elongation complexes. Seems to translocate with the RNA polymerase following initiation and acts by binding to the non template strand of the transcription bubble in elongation complexes. This chain is Transcription factor E, found in Thermococcus kodakarensis (strain ATCC BAA-918 / JCM 12380 / KOD1) (Pyrococcus kodakaraensis (strain KOD1)).